We begin with the raw amino-acid sequence, 207 residues long: ATP-dependent Clp protease proteolytic subunit (207 aa).

The active-site Nucleophile is the Ser112. His137 is an active-site residue.

Belongs to the peptidase S14 family. In terms of assembly, fourteen ClpP subunits assemble into 2 heptameric rings which stack back to back to give a disk-like structure with a central cavity, resembling the structure of eukaryotic proteasomes.

The protein resides in the cytoplasm. It carries out the reaction Hydrolysis of proteins to small peptides in the presence of ATP and magnesium. alpha-casein is the usual test substrate. In the absence of ATP, only oligopeptides shorter than five residues are hydrolyzed (such as succinyl-Leu-Tyr-|-NHMec, and Leu-Tyr-Leu-|-Tyr-Trp, in which cleavage of the -Tyr-|-Leu- and -Tyr-|-Trp bonds also occurs).. In terms of biological role, cleaves peptides in various proteins in a process that requires ATP hydrolysis. Has a chymotrypsin-like activity. Plays a major role in the degradation of misfolded proteins. In Bacteroides fragilis (strain ATCC 25285 / DSM 2151 / CCUG 4856 / JCM 11019 / LMG 10263 / NCTC 9343 / Onslow / VPI 2553 / EN-2), this protein is ATP-dependent Clp protease proteolytic subunit.